A 91-amino-acid chain; its full sequence is Bacterial microcompartment shell protein PduJ (91 aa).

A BMC domain is found at Ala4–Pro88.

Belongs to the bacterial microcompartments protein family. In terms of assembly, homohexamer with a central pore. Interacts with PduP, which targets PduP to the BMC. Interacts with shell protein PduA.

The protein resides in the bacterial microcompartment. It functions in the pathway polyol metabolism; 1,2-propanediol degradation. In terms of biological role, one of the major shell proteins of the bacterial microcompartment (BMC) dedicated to 1,2-propanediol (1,2-PD) degradation. At least one of PduA or PduJ is required for BMC assembly; it must be encoded as the first gene in the pdu operon. Required for structural integrity of BMCs and to mitigate propionaldehyde toxicity, probably joins facets responsible for BMC closure. Probably the hub for binding multiple enzymes to the interior of the BMC. Its function is as follows. Expression of a cosmid containing the full 21-gene pdu operon in E.coli allows E.coli to grow on 1,2-PD with the appearance of BMCs in its cytoplasm. Overexpression of this protein leads to an internal structure with a whorled architecture. The 1,2-PD-specific bacterial microcompartment (BMC) concentrates low levels of 1,2-PD catabolic enzymes, concentrates volatile reaction intermediates thus enhancing pathway flux and keeps the level of toxic, mutagenic propionaldehyde low. The protein is Bacterial microcompartment shell protein PduJ of Citrobacter freundii.